The primary structure comprises 77 residues: Protein IDA (77 aa).

A signal peptide spans 1-26; it reads MAPCRTMMVLLCFVLFLAASSSCVAA. The segment at 56-69 is RLK5-binding; that stretch reads GVPIPPSAPSKRHN.

Interaction with RLK5. As to expression, expressed specifically in the floral abscission zone.

The protein localises to the secreted. Its subcellular location is the extracellular space. In terms of biological role, involved in an ethylene-independent separation step of floral abscission. Promotes abscission zone (AZ) cells rounding. May act with RLK5 and HSL2 as ligand-receptor pairs. This chain is Protein IDA, found in Arabidopsis thaliana (Mouse-ear cress).